Reading from the N-terminus, the 87-residue chain is Toxin ICK-41 (87 aa).

The signal sequence occupies residues 1–19 (MKPIVYMLLFCAFTVVILG). Cystine bridges form between Cys-40–Cys-54, Cys-40–Cys-77, Cys-53–Cys-66, and Cys-80–Cys-87.

It belongs to the neurotoxin 27 (Jztx-72) family. ICK-41 subfamily. Expressed by the venom gland.

The protein localises to the secreted. Functionally, probable neurotoxin with ion channel impairing activity. The polypeptide is Toxin ICK-41 (Trittame loki (Brush-footed trapdoor spider)).